The primary structure comprises 508 residues: 4-trimethylaminobutyraldehyde dehydrogenase A (508 aa).

NAD(+) contacts are provided by residues lysine 194 and 246 to 250 (GSVPT). Glutamate 268 functions as the Proton acceptor in the catalytic mechanism. The active-site Nucleophile is the cysteine 302. Glutamate 405 is an NAD(+) binding site.

This sequence belongs to the aldehyde dehydrogenase family. Homotetramer.

It is found in the cytoplasm. The protein resides in the cytosol. It carries out the reaction 4-(trimethylamino)butanal + NAD(+) + H2O = 4-(trimethylamino)butanoate + NADH + 2 H(+). The catalysed reaction is an aldehyde + NAD(+) + H2O = a carboxylate + NADH + 2 H(+). Its pathway is amine and polyamine biosynthesis; carnitine biosynthesis. Its function is as follows. Converts gamma-trimethylaminobutyraldehyde into gamma-butyrobetaine with high efficiency (in vitro). Can catalyze the irreversible oxidation of a broad range of aldehydes to the corresponding acids in an NAD-dependent reaction, but with low efficiency. The protein is 4-trimethylaminobutyraldehyde dehydrogenase A (aldh9a1a) of Danio rerio (Zebrafish).